We begin with the raw amino-acid sequence, 86 residues long: Small ribosomal subunit protein bS20 (86 aa).

It belongs to the bacterial ribosomal protein bS20 family.

In terms of biological role, binds directly to 16S ribosomal RNA. This chain is Small ribosomal subunit protein bS20, found in Pelagibacter ubique (strain HTCC1062).